Reading from the N-terminus, the 327-residue chain is Polyprenyl transferase andD (327 aa).

A run of 8 helical transmembrane segments spans residues Leu-49–Ala-69, Ile-81–Ile-101, Phe-140–Phe-160, Pro-174–Leu-194, Ile-201–Tyr-221, Cys-244–Gly-264, Ala-271–Ala-291, and Cys-307–Ser-327.

It belongs to the UbiA prenyltransferase family. Mg(2+) serves as cofactor.

The protein resides in the membrane. It functions in the pathway secondary metabolite biosynthesis; terpenoid biosynthesis. Functionally, polyprenyl transferase; part of the gene cluster that mediates the biosynthesis of anditomin, a fungal meroterpenoid. The first step of the pathway is the synthesis of 3,5-dimethylorsellinic acid (DMOA) by the polyketide synthase andM. DMOA is then converted to the phthalide compound 5,7-dihydroxy-4,6-dimethylphthalide (DHDMP) by the cytochrome P450 monooxygenase andK, which is further prenylated by the prenyltransferase andD to yield farnesyl-DHDMP. Further epoxidation by the FAD-dependent monooxygenase andE leads to epoxyfarnesyl-DHDMP. The next step involves the terpene cyclase andB that converts epoxyfarnesyl-DHDMP into preandiloid A through opening of the epoxide ring followed by the cyclization of the farnesyl moiety. Preandiloid A is in turn oxidized at the C-3 hydroxyl group to yield preandiloid B by the dehydrogenase andC. The dioxygenase andA is solely responsible for the dehydrogenation of preandiloid B leading to the enone preandiloid C, as well as for the intriguing structural rearrangement to generate the bicyclo[2.2.2]octane core, transforming preandiloid C into andiconin. FAD-binding monooxygenase andJ then produces andilesin D which is reduced by dehydrogenase andI to yield andilesin A. Action of acetyltransferase andG followed by a spontaneous acetate elimination leads then to andilesin B, which is in turn substrate of the short chain dehydrogenase andH to yield andilesin C. Finally, the dioxygenase andF catalyzes the transformation of andilesin C to anditomin. This is Polyprenyl transferase andD from Emericella variicolor (Aspergillus stellatus).